An 81-amino-acid chain; its full sequence is Ferredoxin (81 aa).

Residues 2–30 form the 4Fe-4S ferredoxin-type domain; the sequence is KYTIVDKETCIACGACGAAAPDIYDYDED. Positions 11, 14, 17, and 61 each coordinate [4Fe-4S] cluster.

[4Fe-4S] cluster serves as cofactor.

Functionally, ferredoxins are iron-sulfur proteins that transfer electrons in a wide variety of metabolic reactions. This is Ferredoxin from Bacillus thermoproteolyticus.